Reading from the N-terminus, the 308-residue chain is Protoheme IX farnesyltransferase (308 aa).

The next 8 helical transmembrane spans lie at 20 to 40 (LLAYLALTKPRVIELLLVTAI), 50 to 70 (AIHPLLMLNTLVGGMMAAAGA), 102 to 122 (NALALGLTLTVISFFWLWCAT), 124 to 144 (LLAGVLALVTVAFYVFVYTLW), 149 to 169 (TSQNVVWGGAAGCMPVMIGWS), 170 to 190 (AITGTIAWPALAMFAIIFFWT), 227 to 249 (LIYTWLTVAATLVLALATSWLYG), and 288 to 308 (YLAVVFCALAVDSVIALPTLH).

This sequence belongs to the UbiA prenyltransferase family. Protoheme IX farnesyltransferase subfamily.

Its subcellular location is the cell membrane. It catalyses the reaction heme b + (2E,6E)-farnesyl diphosphate + H2O = Fe(II)-heme o + diphosphate. Its pathway is porphyrin-containing compound metabolism; heme O biosynthesis; heme O from protoheme: step 1/1. Functionally, converts heme B (protoheme IX) to heme O by substitution of the vinyl group on carbon 2 of heme B porphyrin ring with a hydroxyethyl farnesyl side group. The polypeptide is Protoheme IX farnesyltransferase (Mycobacterium tuberculosis (strain ATCC 25618 / H37Rv)).